Here is a 241-residue protein sequence, read N- to C-terminus: Triosephosphate isomerase (241 aa).

Residue 9–11 (NWK) participates in substrate binding. Catalysis depends on histidine 96, which acts as the Electrophile. The active-site Proton acceptor is the glutamate 165. Substrate-binding positions include glycine 171, serine 204, and 225–226 (GG).

Belongs to the triosephosphate isomerase family. In terms of assembly, homodimer.

It is found in the cytoplasm. The catalysed reaction is D-glyceraldehyde 3-phosphate = dihydroxyacetone phosphate. It functions in the pathway carbohydrate biosynthesis; gluconeogenesis. The protein operates within carbohydrate degradation; glycolysis; D-glyceraldehyde 3-phosphate from glycerone phosphate: step 1/1. In terms of biological role, involved in the gluconeogenesis. Catalyzes stereospecifically the conversion of dihydroxyacetone phosphate (DHAP) to D-glyceraldehyde-3-phosphate (G3P). The protein is Triosephosphate isomerase of Prochlorococcus marinus subsp. pastoris (strain CCMP1986 / NIES-2087 / MED4).